We begin with the raw amino-acid sequence, 428 residues long: Serine--tRNA ligase (428 aa).

231–233 (TSE) lines the L-serine pocket. ATP-binding positions include 262 to 264 (RRE) and Val278. Glu285 provides a ligand contact to L-serine. 349 to 352 (ELTS) serves as a coordination point for ATP. L-serine is bound at residue Thr384.

Belongs to the class-II aminoacyl-tRNA synthetase family. Type-1 seryl-tRNA synthetase subfamily. Homodimer. The tRNA molecule binds across the dimer.

The protein resides in the cytoplasm. It carries out the reaction tRNA(Ser) + L-serine + ATP = L-seryl-tRNA(Ser) + AMP + diphosphate + H(+). It catalyses the reaction tRNA(Sec) + L-serine + ATP = L-seryl-tRNA(Sec) + AMP + diphosphate + H(+). It participates in aminoacyl-tRNA biosynthesis; selenocysteinyl-tRNA(Sec) biosynthesis; L-seryl-tRNA(Sec) from L-serine and tRNA(Sec): step 1/1. In terms of biological role, catalyzes the attachment of serine to tRNA(Ser). Is also able to aminoacylate tRNA(Sec) with serine, to form the misacylated tRNA L-seryl-tRNA(Sec), which will be further converted into selenocysteinyl-tRNA(Sec). This Bifidobacterium longum subsp. infantis (strain ATCC 15697 / DSM 20088 / JCM 1222 / NCTC 11817 / S12) protein is Serine--tRNA ligase.